The chain runs to 352 residues: Histidinol-phosphate aminotransferase (352 aa).

Lys-221 is subject to N6-(pyridoxal phosphate)lysine.

It belongs to the class-II pyridoxal-phosphate-dependent aminotransferase family. Histidinol-phosphate aminotransferase subfamily. As to quaternary structure, homodimer. Pyridoxal 5'-phosphate is required as a cofactor.

It catalyses the reaction L-histidinol phosphate + 2-oxoglutarate = 3-(imidazol-4-yl)-2-oxopropyl phosphate + L-glutamate. It functions in the pathway amino-acid biosynthesis; L-histidine biosynthesis; L-histidine from 5-phospho-alpha-D-ribose 1-diphosphate: step 7/9. This chain is Histidinol-phosphate aminotransferase, found in Staphylococcus aureus (strain MRSA252).